Here is a 474-residue protein sequence, read N- to C-terminus: AAA-ATPase At3g28610 (474 aa).

The N-terminal stretch at 1-25 is a signal peptide; that stretch reads MMGNMFGSSLASLFFLWATIQQIFP. Residue 244-251 participates in ATP binding; sequence GPPGTGKS.

This sequence belongs to the AAA ATPase family. BCS1 subfamily. Requires Mg(2+) as cofactor.

The catalysed reaction is ATP + H2O = ADP + phosphate + H(+). This Arabidopsis thaliana (Mouse-ear cress) protein is AAA-ATPase At3g28610.